The following is a 131-amino-acid chain: Superoxide dismutase [Ni] (131 aa).

Positions 1–14 (MLSRLFAPKVKVSA) are excised as a propeptide. Residues H15, C16, and C20 each contribute to the Ni(2+) site.

Belongs to the nickel superoxide dismutase family. Homohexamer. The hexameric protein has roughly the shape of a hollow sphere with an outer diameter of 72 Angstroms and a large inner cavity. The cofactor is Ni(2+).

Its subcellular location is the cytoplasm. It catalyses the reaction 2 superoxide + 2 H(+) = H2O2 + O2. The polypeptide is Superoxide dismutase [Ni] (sodN) (Streptomyces seoulensis).